Reading from the N-terminus, the 423-residue chain is Limonoid 21-O-acetyltransferse (423 aa).

Active-site proton acceptor residues include H152 and D362.

This sequence belongs to the plant acyltransferase family. In terms of assembly, monomer. As to expression, mainly expressed in petioles.

The catalysed reaction is isomeliandiol + acetyl-CoA = 21-O-acetyl-isomeliandiol + CoA. It functions in the pathway secondary metabolite biosynthesis; terpenoid biosynthesis. Acetyltransferase involved in the biosynthesis of limonoids triterpene natural products such as azadirachtin, an antifeedant widely used as bioinsecticide, and possessing many medicinal applications including anti-tumoral, anti-malarial, anti-rheumatic, antibacterial, anti-inflammatory, anti-pyretic and diuretic effects. Catalyzes the formation of 21-O-acetyl-isomeliandiol from isomeliandiol. The polypeptide is Limonoid 21-O-acetyltransferse (Melia azedarach (Chinaberry tree)).